A 304-amino-acid polypeptide reads, in one-letter code: N-acetylmuramic acid 6-phosphate etherase (304 aa).

Positions 62 to 225 constitute an SIS domain; that stretch reads IVTAFRQGGR…TTASMILMGK (164 aa). Glu90 serves as the catalytic Proton donor. The active site involves Glu121.

It belongs to the GCKR-like family. MurNAc-6-P etherase subfamily. In terms of assembly, homodimer.

The enzyme catalyses N-acetyl-D-muramate 6-phosphate + H2O = N-acetyl-D-glucosamine 6-phosphate + (R)-lactate. It functions in the pathway amino-sugar metabolism; 1,6-anhydro-N-acetylmuramate degradation. It participates in amino-sugar metabolism; N-acetylmuramate degradation. Its pathway is cell wall biogenesis; peptidoglycan recycling. Specifically catalyzes the cleavage of the D-lactyl ether substituent of MurNAc 6-phosphate, producing GlcNAc 6-phosphate and D-lactate. Together with AnmK, is also required for the utilization of anhydro-N-acetylmuramic acid (anhMurNAc) either imported from the medium or derived from its own cell wall murein, and thus plays a role in cell wall recycling. The protein is N-acetylmuramic acid 6-phosphate etherase of Actinobacillus succinogenes (strain ATCC 55618 / DSM 22257 / CCUG 43843 / 130Z).